A 571-amino-acid polypeptide reads, in one-letter code: MQISSAFGALIWVVTSYILYAIISNFIISRRHAAKARELKCEEPPFEKNRWPLGIDNLLRALAADKAQQFPVDIIKRFEDLGAHTYRYQILGARNIRTADPKNIQTILANKFNDFDVGPSRRGNFLPMLGNGIFTADGDHWKHSRAIIRPQFTRDQVSDLNLEETHVQNLMKLIGPMIGSNGWIEQIDLLPYFFRLTIDSATEFLFGEPVNSQLRFLPGYQSSKLGSKEERFATAFDSGQMALATRSRFMDSWWLYDSLAFRNSCKIVHDFVDHFVQLALSRGLREKVSDTNSGGKEQYIFLEAIAAETQNPTELRSELLHVLLAGRDTTASHLGWVFHNLARDPVRYKKLRDIIIDEFGTYENPSEITFAKLKACKYLRYVNDESLRLYPVVPINARYANKDTTLPRGGGKDGNSPIFIPKGSSTDFSVHVMHRRKDIWGPDADEFKPERWEGRKVGWEYLPFNGGPRICIGQQFALIEASYVTVRLLQRFDRMESLDKDAVVGHNLTLINCIANGVKTRSSIEFDGQTSQNDDQLRTIVEKPLVQKRSRCPLPAEAKLPKSRKPIGTAS.

The helical transmembrane segment at G8–I28 threads the bilayer. Position 471 (C471) interacts with heme. A disordered region spans residues C552–S571.

The protein belongs to the cytochrome P450 family. It depends on heme as a cofactor.

The protein localises to the membrane. The protein operates within mycotoxin biosynthesis. In terms of biological role, cytochrome P450 monooxygenase; part of the gene cluster that mediates the biosynthesis of 1233A, a natural compound known as an inhibitor of HMG-CoA synthase in the mevalonate pathway and with antibacterial and antifungal activities. The highly reducing polyketide synthase g433 is responsible for the 1233A backbone biosynthesis and the cytochrome P450 monooxygenase g430 catalyzes oxidation of the backbone. This Fusarium sp protein is Cytochrome P450 monooxygenase g430.